The chain runs to 273 residues: Phosphatidylglycerol--prolipoprotein diacylglyceryl transferase (273 aa).

3 helical membrane passes run 20 to 40, 59 to 79, and 97 to 117; these read LAVR…LPIA, FLFY…VLFY, and GGMS…YFSW. A 1,2-diacyl-sn-glycero-3-phospho-(1'-sn-glycerol) is bound at residue Arg-142. 2 helical membrane-spanning segments follow: residues 206–226 and 243–263; these read FGFL…FCEF and MGQL…VYAM.

Belongs to the Lgt family.

The protein resides in the cell inner membrane. The catalysed reaction is L-cysteinyl-[prolipoprotein] + a 1,2-diacyl-sn-glycero-3-phospho-(1'-sn-glycerol) = an S-1,2-diacyl-sn-glyceryl-L-cysteinyl-[prolipoprotein] + sn-glycerol 1-phosphate + H(+). It participates in protein modification; lipoprotein biosynthesis (diacylglyceryl transfer). Functionally, catalyzes the transfer of the diacylglyceryl group from phosphatidylglycerol to the sulfhydryl group of the N-terminal cysteine of a prolipoprotein, the first step in the formation of mature lipoproteins. This chain is Phosphatidylglycerol--prolipoprotein diacylglyceryl transferase, found in Gluconobacter oxydans (strain 621H) (Gluconobacter suboxydans).